The chain runs to 125 residues: MSLPKDLLYTEEHEWVKADDGSYVIGITDFAQDQLGDIVFVELPEVGDTVTKGDSIGSIESVKTVSDFYAPVTGKVVAVNETLEDEPELINSNPYDTGWILKLEEVEEADVKALLSSDDYEKVLD.

The Lipoyl-binding domain occupies 22–104 (SYVIGITDFA…YDTGWILKLE (83 aa)). The residue at position 63 (Lys63) is an N6-lipoyllysine.

The protein belongs to the GcvH family. As to quaternary structure, the glycine cleavage system is composed of four proteins: P, T, L and H. (R)-lipoate is required as a cofactor.

Its function is as follows. The glycine cleavage system catalyzes the degradation of glycine. The H protein shuttles the methylamine group of glycine from the P protein to the T protein. Functionally, is also involved in protein lipoylation via its role as an octanoyl/lipoyl carrier protein intermediate. This chain is Glycine cleavage system H protein, found in Listeria monocytogenes serotype 4a (strain HCC23).